Here is a 320-residue protein sequence, read N- to C-terminus: R2-like ligand binding oxidase (320 aa).

Mn(2+)-binding residues include E68, E101, and H104. Residues 71–162 constitute a cross-link (3-(O4'-tyrosyl)-valine (Val-Tyr)); that stretch reads VTKDIQPFMS…AAQVRASVVY (92 aa). E101 provides a ligand contact to Fe cation. Residues E167, E202, and H205 each contribute to the Fe cation site.

It belongs to the ribonucleoside diphosphate reductase small chain family. R2-like ligand binding oxidase subfamily. As to quaternary structure, homodimer. Fe cation serves as cofactor. Mn(2+) is required as a cofactor.

Probable oxidase that might be involved in lipid metabolism. In Mycolicibacterium smegmatis (strain ATCC 700084 / mc(2)155) (Mycobacterium smegmatis), this protein is R2-like ligand binding oxidase (nrdB).